Reading from the N-terminus, the 509-residue chain is Type II methyltransferase M.BsoBI (509 aa).

The protein belongs to the N(4)/N(6)-methyltransferase family. N(4) subfamily.

The enzyme catalyses a 2'-deoxycytidine in DNA + S-adenosyl-L-methionine = an N(4)-methyl-2'-deoxycytidine in DNA + S-adenosyl-L-homocysteine + H(+). Functionally, an alpha subtype methylase that recognizes the double-stranded sequence 5'-CYCGRG-3', methylates C-1 on both strands, and protects the DNA from cleavage by the BsoBI endonuclease. The polypeptide is Type II methyltransferase M.BsoBI (Geobacillus stearothermophilus (Bacillus stearothermophilus)).